The following is a 224-amino-acid chain: NBPF family member NBPF6-like protein (224 aa).

The Olduvai domain maps to 159–224 (ENHHDRKDEE…ASVCDVQDQL (66 aa)). Basic and acidic residues predominate over residues 198 to 209 (YLTHSSHHDSHR). Residues 198–224 (YLTHSSHHDSHRPPSSIASVCDVQDQL) form a disordered region.

This sequence belongs to the NBPF family.

In Bos taurus (Bovine), this protein is NBPF family member NBPF6-like protein.